A 367-amino-acid polypeptide reads, in one-letter code: Voltage-gated potassium channel subunit beta-2 (367 aa).

A phosphoserine mark is found at Ser9, Ser14, and Ser20. Residue Arg28 is modified to Asymmetric dimethylarginine; alternate. Arg28 carries the omega-N-methylarginine; alternate modification. Position 31 is a phosphoserine (Ser31). The NADP(+) site is built by Thr56, Trp57, Gln63, and Asp85. The active-site Proton donor/acceptor is the Tyr90. Residue Ser112 is modified to Phosphoserine. An N6-acetyllysine modification is found at Lys124. Residues Asn158, Ser188, Arg189, Gln214, Trp243, Ser244, Pro245, Leu246, Ala247, Cys248, Lys254, Tyr262, Arg264, Gly323, Ser325, Gln329, Glu332, and Asn333 each coordinate NADP(+).

This sequence belongs to the shaker potassium channel beta subunit family. Homotetramer. Interaction with tetrameric potassium channel alpha subunits gives rise to a heterooctamer. Identified in potassium channel complexes containing KCNA1, KCNA2, KCNA4, KCNA5, KCNA6, KCNAB1, KCNAB2 and KCND3. Interacts (in unphosphorylated form) with MAPRE1. Forms a ternary complex with SQSTM1 and PRKCZ. Phosphorylated by PRKCZ; may be regulated by incorporation in a complex composed of PRKCZ and SQSTM1. Detected in the juxtaparanodal region of nodes of Ranvier in myelinated nerve fibers in the spinal cord (at protein level).

The protein localises to the cytoplasm. It localises to the membrane. It is found in the cell membrane. Its subcellular location is the cell projection. The protein resides in the axon. The protein localises to the synapse. It localises to the synaptosome. It is found in the cytoskeleton. It catalyses the reaction hydroxyacetone + NADP(+) = methylglyoxal + NADPH + H(+). The enzyme catalyses (E)-4-oxonon-2-en-1-ol + NADP(+) = (E)-4-oxonon-2-enal + NADPH + H(+). Its function is as follows. Regulatory subunit of the voltage-gated potassium (Kv) Shaker channels composed of pore-forming and potassium-conducting alpha subunits and of regulatory beta subunits. The beta-2/KCNAB2 cytoplasmic subunit promotes potassium channel closure via a mechanism that does not involve physical obstruction of the channel pore. Promotes the inactivation of Kv1.4/KCNA4 and Kv1.5/KCNA5 alpha subunit-containing channels. Displays nicotinamide adenine dinucleotide phosphate (NADPH)-dependent aldoketoreductase activity by catalyzing the NADPH-dependent reduction of a wide range of aldehyde and ketone substrates. Substrate specificity includes methylglyoxal, 9,10-phenanthrenequinone, prostaglandin J2, 4-nitrobenzaldehyde, 4-nitroacetophenone and 4-oxo-trans-2-nonenal (in vitro, no physiological substrate identified yet). The binding of oxidized and reduced nucleotide alters Kv channel gating and may contribute to dynamic fine tuning of cell excitability. Contributes to the regulation of nerve signaling, and prevents neuronal hyperexcitability. The polypeptide is Voltage-gated potassium channel subunit beta-2 (KCNAB2) (Bos taurus (Bovine)).